The following is a 123-amino-acid chain: Putative iron-sulfur cluster insertion protein ErpA (123 aa).

Residues cysteine 51, cysteine 115, and cysteine 117 each contribute to the iron-sulfur cluster site.

The protein belongs to the HesB/IscA family. As to quaternary structure, homodimer. Iron-sulfur cluster serves as cofactor.

Its function is as follows. Required for insertion of 4Fe-4S clusters. The chain is Putative iron-sulfur cluster insertion protein ErpA from Burkholderia lata (strain ATCC 17760 / DSM 23089 / LMG 22485 / NCIMB 9086 / R18194 / 383).